Reading from the N-terminus, the 512-residue chain is Dihydroniloticin synthase CYP71CD2 (512 aa).

A helical membrane pass occupies residues 1–21 (MNLQLDYFSITSFLVFLVVLF). Residue Cys449 participates in heme binding.

Belongs to the cytochrome P450 family. Heme is required as a cofactor.

It localises to the membrane. It carries out the reaction tirucalla-7,24-dien-3beta-ol + 2 reduced [NADPH--hemoprotein reductase] + 2 O2 = dihydroniloticin + 2 oxidized [NADPH--hemoprotein reductase] + 2 H2O + 2 H(+). The protein operates within secondary metabolite biosynthesis; terpenoid biosynthesis. Its function is as follows. Monooxygenase involved in the biosynthesis of limonoids triterpene natural products such as azadirachtin, an antifeedant widely used as bioinsecticide, and possessing many medicinal applications including anti-tumoral, anti-malarial, anti-rheumatic, antibacterial, anti-inflammatory, anti-pyretic and diuretic effects. Catalyzes the conversion of tirucalladienol to dihydroniloticin. In Azadirachta indica (Neem tree), this protein is Dihydroniloticin synthase CYP71CD2.